A 1155-amino-acid chain; its full sequence is ATP-dependent helicase/deoxyribonuclease subunit B (1155 aa).

Position 8-15 (glycine 8–serine 15) interacts with ATP. Residues cysteine 793, cysteine 1115, cysteine 1118, and cysteine 1124 each contribute to the [4Fe-4S] cluster site.

Belongs to the helicase family. AddB/RexB type 1 subfamily. Heterodimer of AddA and AddB. It depends on Mg(2+) as a cofactor. [4Fe-4S] cluster serves as cofactor.

In terms of biological role, the heterodimer acts as both an ATP-dependent DNA helicase and an ATP-dependent, dual-direction single-stranded exonuclease. Recognizes the chi site generating a DNA molecule suitable for the initiation of homologous recombination. The AddB subunit has 5' -&gt; 3' nuclease activity but not helicase activity. The chain is ATP-dependent helicase/deoxyribonuclease subunit B from Clostridioides difficile (strain 630) (Peptoclostridium difficile).